We begin with the raw amino-acid sequence, 150 residues long: Nucleoside diphosphate kinase (150 aa).

6 residues coordinate ATP: K9, F57, R85, T91, R102, and N112. H115 functions as the Pros-phosphohistidine intermediate in the catalytic mechanism.

This sequence belongs to the NDK family. As to quaternary structure, homotetramer. It depends on Mg(2+) as a cofactor.

Its subcellular location is the cytoplasm. The enzyme catalyses a 2'-deoxyribonucleoside 5'-diphosphate + ATP = a 2'-deoxyribonucleoside 5'-triphosphate + ADP. It carries out the reaction a ribonucleoside 5'-diphosphate + ATP = a ribonucleoside 5'-triphosphate + ADP. Its function is as follows. Major role in the synthesis of nucleoside triphosphates other than ATP. The ATP gamma phosphate is transferred to the NDP beta phosphate via a ping-pong mechanism, using a phosphorylated active-site intermediate. This Thermosynechococcus vestitus (strain NIES-2133 / IAM M-273 / BP-1) protein is Nucleoside diphosphate kinase.